The primary structure comprises 430 residues: Terminal nucleotidyltransferase 5B (430 aa).

A disordered region spans residues 1–46 (MMPSESETESRDRAAAQVGTAAAAAVAKAAPAGGGPDPEASSASLG). A compositionally biased stretch (low complexity) spans 15 to 44 (AAQVGTAAAAAVAKAAPAGGGPDPEASSAS).

This sequence belongs to the TENT family.

Its subcellular location is the cytoplasm. The protein localises to the nucleus. It carries out the reaction RNA(n) + ATP = RNA(n)-3'-adenine ribonucleotide + diphosphate. Functionally, catalyzes the transfer of one adenosine molecule from an ATP to an mRNA poly(A) tail bearing a 3'-OH terminal group in an ATP hydrolysis-dependent manner. May be involved in maintaining the translation efficiency of at least some genes through preventing degradation of their mRNAs. Prefers RNA molecules that are adenosine-rich close to 3'-end. In addition, may inhibit cell proliferation and cell cycle progression through ubiquitination of beta-catenin/CTNNB1. In Bos taurus (Bovine), this protein is Terminal nucleotidyltransferase 5B.